A 994-amino-acid polypeptide reads, in one-letter code: Valine--tRNA ligase (994 aa).

The short motif at 43 to 53 (PNVTGTLHMGH) is the 'HIGH' region element. A compositionally biased stretch (polar residues) spans 329 to 345 (QSGMPSGATSDTTNTPS). Residues 329 to 355 (QSGMPSGATSDTTNTPSDPEASSAANQ) are disordered. A 'KMSKS' region motif is present at residues 585–589 (KMSKS). Position 588 (Lys588) interacts with ATP. The tract at residues 692-714 (AHSPAQHQAGQDGQDAPRTPQPR) is disordered. Over residues 696–707 (AQHQAGQDGQDA) the composition is skewed to low complexity. Residues 928–994 (LIDVDAERVR…NGLRERRATL (67 aa)) are a coiled coil.

Belongs to the class-I aminoacyl-tRNA synthetase family. ValS type 1 subfamily. Monomer.

It is found in the cytoplasm. It carries out the reaction tRNA(Val) + L-valine + ATP = L-valyl-tRNA(Val) + AMP + diphosphate. Functionally, catalyzes the attachment of valine to tRNA(Val). As ValRS can inadvertently accommodate and process structurally similar amino acids such as threonine, to avoid such errors, it has a 'posttransfer' editing activity that hydrolyzes mischarged Thr-tRNA(Val) in a tRNA-dependent manner. This Xylella fastidiosa (strain 9a5c) protein is Valine--tRNA ligase.